The following is a 397-amino-acid chain: Elongation factor Tu (397 aa).

Residues 10–206 enclose the tr-type G domain; the sequence is KPHVNIGTIG…HIDTYIPEPT (197 aa). The G1 stretch occupies residues 19-26; sequence GHVDHGKT. Residue 19-26 participates in GTP binding; it reads GHVDHGKT. A Mg(2+)-binding site is contributed by Thr-26. Positions 61–65 are G2; sequence GITIS. The segment at 82–85 is G3; it reads DCPG. Residues 82 to 86 and 137 to 140 contribute to the GTP site; these read DCPGH and NKCD. Positions 137–140 are G4; the sequence is NKCD. Residues 175–177 form a G5 region; that stretch reads SAL.

The protein belongs to the TRAFAC class translation factor GTPase superfamily. Classic translation factor GTPase family. EF-Tu/EF-1A subfamily. Monomer.

The protein resides in the cytoplasm. It catalyses the reaction GTP + H2O = GDP + phosphate + H(+). GTP hydrolase that promotes the GTP-dependent binding of aminoacyl-tRNA to the A-site of ribosomes during protein biosynthesis. This chain is Elongation factor Tu, found in Alkaliphilus oremlandii (strain OhILAs) (Clostridium oremlandii (strain OhILAs)).